A 265-amino-acid polypeptide reads, in one-letter code: tRNA (guanine-N(7)-)-methyltransferase (265 aa).

S-adenosyl-L-methionine contacts are provided by E96, E121, D148, and D170. The active site involves D170. Substrate is bound by residues K174 and D206.

Belongs to the class I-like SAM-binding methyltransferase superfamily. TrmB family.

It carries out the reaction guanosine(46) in tRNA + S-adenosyl-L-methionine = N(7)-methylguanosine(46) in tRNA + S-adenosyl-L-homocysteine. The protein operates within tRNA modification; N(7)-methylguanine-tRNA biosynthesis. Functionally, catalyzes the formation of N(7)-methylguanine at position 46 (m7G46) in tRNA. The protein is tRNA (guanine-N(7)-)-methyltransferase of Rhodopseudomonas palustris (strain ATCC BAA-98 / CGA009).